We begin with the raw amino-acid sequence, 802 residues long: MSYKVNSSYPDSIPPTEQPYMASQYKQDLQSNIAMATNSEQQRQQQQQQQQQQQQQQQWINQPTAENSDLKEKMNCKNTLNEYIFDFLTKSSLKNTAAAFAQDAHLDRDKGQNPIDGPKSKENNGNQNTFSKVVDTPQGFLYEWWQIFWDIFNTSSSRGGSEFAQQYYQLVLQEQRQEQIYRSLAVHAARLQHDAERRGEYSNEDIDPMHLAAMMLGNPMAPAVQMRNVNMNPIPIPMVGNPIVNNFSIPPYNNANPTTGATAVAPTAPPSGDFTNVGPTQNRSQNVTGWPVYNYPMQPTTENPVGNPCNNNTTNNTTNNKSPVNQPKSLKTMHSTDKPNNVPTSKSTRSRSATSKAKGKVKAGLVAKRRRKNNTATVSAGSTNAGSPNITTPGSTTSEPAMVGSRVNKTPRSDIATNFRNQAIIFGEEDIYSNSKSSPSLDGASPSALVSKQPTKVRKNTKKASTSAFPVESANKLGGNSVVTGKKRSPPNTRVSRRKSTPSVILNADATKDENNMLRTFSNTTAPNIHSAPPTKTANSLPFPGINLGSFNKPAVSSPLSSVTESCFDPESGKIAGKNGPKRAVNSKVSASSPLSIATPPSGDAQKQRSSKVPGNVVIKPPHGFSTTNLNITLKSSKIITSQNNTVSQELPNGGNILEAQVGNDSRSSKGNRNTLSTSEEKKPSSNNQGYDFDALKNPSSLLFPNQAYASNNRTPNENSNVTDETSASTNNGDNDNTLIQPSSNVGTTLGPQQTSTYENQNVHSQNLKFGNIGMVEDQGPDYDLNLLDTNENDFNFINWEG.

Polar residues-rich tracts occupy residues 1 to 10 (MSYKVNSSYP) and 28 to 40 (DLQSNIAMATNSE). Disordered stretches follow at residues 1-20 (MSYKVNSSYPDSIPPTEQPY), 28-71 (DLQS…SDLK), 104-130 (AHLDRDKGQNPIDGPKSKENNGNQNTF), 258-409 (TTGA…RVNK), 434-506 (NSKS…SVIL), 566-625 (SCFD…PHGF), and 647-757 (VSQE…QTST). The segment covering 41–58 (QQRQQQQQQQQQQQQQQQ) has biased composition (low complexity). The region spanning 76 to 108 (CKNTLNEYIFDFLTKSSLKNTAAAFAQDAHLDR) is the LisH domain. A compositionally biased stretch (polar residues) spans 273–288 (DFTNVGPTQNRSQNVT). A compositionally biased stretch (low complexity) spans 310-320 (NNNTTNNTTNN). Polar residues predominate over residues 321–343 (KSPVNQPKSLKTMHSTDKPNNVP). The segment covering 344 to 356 (TSKSTRSRSATSK) has biased composition (low complexity). Basic residues predominate over residues 357-373 (AKGKVKAGLVAKRRRKN). A compositionally biased stretch (polar residues) spans 374–399 (NTATVSAGSTNAGSPNITTPGSTTSE). Residues 485–500 (GKKRSPPNTRVSRRKS) show a composition bias toward basic residues. Polar residues-rich tracts occupy residues 587 to 596 (SKVSASSPLS), 663 to 678 (GNDSRSSKGNRNTLST), and 698 to 757 (NPSS…QTST).

Belongs to the FLO8 family.

It is found in the nucleus. Required for diploid filamentous growth, haploid invasive growth and flocculation. Putative transcriptional activator of FLO1. In Saccharomyces cerevisiae (strain JAY291) (Baker's yeast), this protein is Transcriptional activator FLO8 (FLO8).